We begin with the raw amino-acid sequence, 303 residues long: Coenzyme PQQ synthesis protein B (303 aa).

The protein belongs to the PqqB family.

The protein operates within cofactor biosynthesis; pyrroloquinoline quinone biosynthesis. In terms of biological role, may be involved in the transport of PQQ or its precursor to the periplasm. This is Coenzyme PQQ synthesis protein B from Pseudomonas syringae pv. syringae (strain B728a).